The following is a 121-amino-acid chain: Small ribosomal subunit protein bS16m (121 aa).

This sequence belongs to the bacterial ribosomal protein bS16 family. In terms of assembly, component of the mitochondrial small ribosomal subunit (mt-SSU). Mature yeast 74S mitochondrial ribosomes consist of a small (37S) and a large (54S) subunit. The 37S small subunit contains a 15S ribosomal RNA (15S mt-rRNA) and 34 different proteins. The 54S large subunit contains a 21S rRNA (21S mt-rRNA) and 46 different proteins.

Its subcellular location is the mitochondrion. Functionally, component of the mitochondrial ribosome (mitoribosome), a dedicated translation machinery responsible for the synthesis of mitochondrial genome-encoded proteins, including at least some of the essential transmembrane subunits of the mitochondrial respiratory chain. The mitoribosomes are attached to the mitochondrial inner membrane and translation products are cotranslationally integrated into the membrane. In Saccharomyces cerevisiae (strain ATCC 204508 / S288c) (Baker's yeast), this protein is Small ribosomal subunit protein bS16m (MRPS16).